The sequence spans 414 residues: Serine hydroxymethyltransferase (414 aa).

Residues leucine 116 and 120-122 (GHL) each bind (6S)-5,6,7,8-tetrahydrofolate. Lysine 224 is modified (N6-(pyridoxal phosphate)lysine). (6S)-5,6,7,8-tetrahydrofolate is bound by residues glutamate 240 and 348–350 (SPF).

The protein belongs to the SHMT family. Homodimer. Pyridoxal 5'-phosphate is required as a cofactor.

It localises to the cytoplasm. The enzyme catalyses (6R)-5,10-methylene-5,6,7,8-tetrahydrofolate + glycine + H2O = (6S)-5,6,7,8-tetrahydrofolate + L-serine. It functions in the pathway one-carbon metabolism; tetrahydrofolate interconversion. It participates in amino-acid biosynthesis; glycine biosynthesis; glycine from L-serine: step 1/1. Catalyzes the reversible interconversion of serine and glycine with tetrahydrofolate (THF) serving as the one-carbon carrier. This reaction serves as the major source of one-carbon groups required for the biosynthesis of purines, thymidylate, methionine, and other important biomolecules. Also exhibits THF-independent aldolase activity toward beta-hydroxyamino acids, producing glycine and aldehydes, via a retro-aldol mechanism. The polypeptide is Serine hydroxymethyltransferase (Campylobacter jejuni (strain RM1221)).